A 185-amino-acid polypeptide reads, in one-letter code: Folate transporter FolT (185 aa).

The next 4 membrane-spanning stretches (helical) occupy residues 34–54 (LTVG…SLIA), 64–84 (LIAA…AFFV), 114–134 (VAVG…WLVM), and 157–177 (LIMF…QVIS).

In E.coli forms a stable energy-coupling factor (ECF) transporter complex probably composed of a membrane-embedded substrate-binding protein (S component), two ATP-binding proteins (A components) and a transmembrane protein (T component).

The protein localises to the cell membrane. Its function is as follows. Folate-binding protein that interacts with the energy-coupling factor (ECF) ABC-transporter complex. Unlike classic ABC transporters this ECF transporter provides the energy necessary to transport a number of different substrates. The substrates themselves are bound by transmembrane, not extracytoplasmic soluble proteins. Upon coexpression with EcfA1A2T in E.coli allows 5-formyltetrahydrofolate uptake; uptake requires both FolT and EcfA1A2T. The sequence is that of Folate transporter FolT (folT) from Leuconostoc mesenteroides subsp. mesenteroides (strain ATCC 8293 / DSM 20343 / BCRC 11652 / CCM 1803 / JCM 6124 / NCDO 523 / NBRC 100496 / NCIMB 8023 / NCTC 12954 / NRRL B-1118 / 37Y).